The primary structure comprises 151 residues: MAQIGIFVGTVYGNALLVAEEAENILKDRGHEVKVFEDATLESWLDYREQTVLVVTSTTGQGQLPDSIVPLYAALREKGGYQPALRYGVIALGDSSYPNFCAGGHLFDALLQEIGAKRLGDVLDVDAVEHPEPEVISCPWVEAWADLVDAQ.

In terms of domain architecture, Flavodoxin-like spans 4–145 (IGIFVGTVYG…ISCPWVEAWA (142 aa)). Residues 10–15 (TVYGNA) and 99–101 (NFC) each bind FMN.

It belongs to the flavodoxin family. MioC subfamily. Monomer. FMN is required as a cofactor.

In terms of biological role, probable electron transporter. In Pectobacterium carotovorum subsp. carotovorum (Erwinia carotovora subsp. carotovora), this protein is Flavodoxin YqcA.